Here is a 159-residue protein sequence, read N- to C-terminus: Small ribosomal subunit protein uS9 (159 aa).

The protein belongs to the universal ribosomal protein uS9 family.

The chain is Small ribosomal subunit protein uS9 from Rickettsia peacockii (strain Rustic).